We begin with the raw amino-acid sequence, 194 residues long: Thioredoxin peroxidase (194 aa).

The 159-residue stretch at 2–160 folds into the Thioredoxin domain; it reads LQPNMPAPNF…ALRLLDAFIF (159 aa). The active-site Cysteine sulfenic acid (-SOH) intermediate is the Cys-47.

It belongs to the peroxiredoxin family. AhpC/Prx1 subfamily. In terms of assembly, homodimer; disulfide-linked, upon oxidation.

The enzyme catalyses a hydroperoxide + [thioredoxin]-dithiol = an alcohol + [thioredoxin]-disulfide + H2O. Functionally, antioxidant. Could be involved in protection against reactive oxygen species (ROS) generated by metabolic processes and/or protection of the parasite against ROS released by immune effector cells. Thiol-specific peroxidase that catalyzes the reduction of hydrogen peroxide and organic hydroperoxides to water and alcohols, respectively. Plays a role in cell protection against oxidative stress by detoxifying peroxides and as sensor of hydrogen peroxide-mediated signaling events. The protein is Thioredoxin peroxidase of Fasciola hepatica (Liver fluke).